A 203-amino-acid chain; its full sequence is Small ribosomal subunit protein uS4 (203 aa).

A disordered region spans residues 20-45 (LPGLTRKRPKNTNPPGMHGAERKKKS). Positions 92-155 (MRLDCIVFRL…SSRKLVAAYA (64 aa)) constitute an S4 RNA-binding domain.

The protein belongs to the universal ribosomal protein uS4 family. As to quaternary structure, part of the 30S ribosomal subunit. Contacts protein S5. The interaction surface between S4 and S5 is involved in control of translational fidelity.

In terms of biological role, one of the primary rRNA binding proteins, it binds directly to 16S rRNA where it nucleates assembly of the body of the 30S subunit. Its function is as follows. With S5 and S12 plays an important role in translational accuracy. This is Small ribosomal subunit protein uS4 from Synechococcus sp. (strain JA-3-3Ab) (Cyanobacteria bacterium Yellowstone A-Prime).